The chain runs to 251 residues: MRILVSNDDGYLAPGIRVLADCLAKIAEVIVVAPDRDRSGASHSLTLDTPLRATLGENGFYRVEGTPTDCVHLGITGLLEKEPDMVVSGVNWGANLGDDVIYSGTVAAAMEGRFLGLPAIAVSLASAEPEHFDTAAWVARRLVTSLMEDPLPADTILNVNVPNLPRTQITDFEATRLGHRHRSEPVIKDADPRGRPIYWVGPAGESQDAGPGTDFHAIARGSVSITPIQVDLTRYAALDQVAGWLQRIPRS.

A divalent metal cation is bound by residues aspartate 8, aspartate 9, serine 39, and asparagine 91.

It belongs to the SurE nucleotidase family. A divalent metal cation serves as cofactor.

It is found in the cytoplasm. The enzyme catalyses a ribonucleoside 5'-phosphate + H2O = a ribonucleoside + phosphate. Functionally, nucleotidase that shows phosphatase activity on nucleoside 5'-monophosphates. The sequence is that of 5'-nucleotidase SurE from Nitrosococcus oceani (strain ATCC 19707 / BCRC 17464 / JCM 30415 / NCIMB 11848 / C-107).